A 209-amino-acid polypeptide reads, in one-letter code: Dual specificity phosphatase 29 (209 aa).

Residues 45–193 (HVNEVWPNLY…LRELDIKLAL (149 aa)) enclose the Tyrosine-protein phosphatase domain. Residue 137-144 (NCAMGRSR) participates in substrate binding. The Phosphocysteine intermediate role is filled by Cys138.

This sequence belongs to the protein-tyrosine phosphatase family. Non-receptor class dual specificity subfamily.

It localises to the cytoplasm. Its subcellular location is the nucleus. It catalyses the reaction O-phospho-L-tyrosyl-[protein] + H2O = L-tyrosyl-[protein] + phosphate. The catalysed reaction is O-phospho-L-seryl-[protein] + H2O = L-seryl-[protein] + phosphate. It carries out the reaction O-phospho-L-threonyl-[protein] + H2O = L-threonyl-[protein] + phosphate. In terms of biological role, dual specificity phosphatase able to dephosphorylate phosphotyrosine, phosphoserine and phosphothreonine residues, with a preference for phosphotyrosine as a substrate. Dual specificity phosphatase able to dephosphorylate phosphotyrosine, phosphoserine and phosphothreonine residues within the same substrate, with a preference for phosphotyrosine as a substrate. Involved in the modulation of AMPK and MAPK1/2 signaling pathway. This chain is Dual specificity phosphatase 29 (dusp29), found in Xenopus laevis (African clawed frog).